Here is a 96-residue protein sequence, read N- to C-terminus: MHTFLTARLQAIEDVSNRNLSMLELILTRAIVTHWIILDLVLNLIFDSLITSFVIIYSLYSFVARNNKVLLFLLMSYAIFRFIVMYLLYIVSESID.

2 helical membrane-spanning segments follow: residues 36–56 (IILD…FVII) and 71–91 (LFLL…LYIV).

It belongs to the chordopoxvirinae L2 family.

It localises to the virion membrane. The protein localises to the host cytoplasm. Its function is as follows. Early protein involved in early virion morphogenesis. Participates in the formation and elongation of crescent-shaped membrane precursors of immature virions in cytoplasmic factories. The chain is Protein FPV129 from Vertebrata (FPV).